Reading from the N-terminus, the 341-residue chain is Adenine deaminase (341 aa).

3 residues coordinate Zn(2+): His-17, His-19, and His-197. Residue Glu-200 is the Proton donor of the active site. A Zn(2+)-binding site is contributed by Asp-278. A substrate-binding site is contributed by Asp-279.

It belongs to the metallo-dependent hydrolases superfamily. Adenosine and AMP deaminases family. Adenine deaminase type 2 subfamily. Zn(2+) is required as a cofactor.

The enzyme catalyses adenine + H2O + H(+) = hypoxanthine + NH4(+). Catalyzes the hydrolytic deamination of adenine to hypoxanthine. Plays an important role in the purine salvage pathway and in nitrogen catabolism. This chain is Adenine deaminase, found in Chlorobium luteolum (strain DSM 273 / BCRC 81028 / 2530) (Pelodictyon luteolum).